A 347-amino-acid polypeptide reads, in one-letter code: Heat-inducible transcription repressor HrcA (347 aa).

This sequence belongs to the HrcA family.

Negative regulator of class I heat shock genes (grpE-dnaK-dnaJ and groELS operons). Prevents heat-shock induction of these operons. This is Heat-inducible transcription repressor HrcA from Lactococcus lactis subsp. cremoris (strain MG1363).